The following is a 541-amino-acid chain: Presenilin homolog (541 aa).

Composition is skewed to polar residues over residues 1-14 and 43-52; these read MAAV…SSGL and NNYGSSNQDQ. 2 disordered regions span residues 1–52 and 69–92; these read MAAV…NQDQ and CGSR…NEME. Residues 1–106 are Cytoplasmic-facing; it reads MAAVNLQASC…LKYGAQHVIK (106 aa). A helical transmembrane segment spans residues 107-127; it reads LFVPVSLCMLVVVATINSISF. Topologically, residues 128–154 are lumenal; that stretch reads YNSTDVYLLYTPFHEQSPEPSVKFWSA. Asn-129 carries an N-linked (GlcNAc...) asparagine glycan. Residues 155–175 form a helical membrane-spanning segment; the sequence is LANSLILMSVVVVMTFLLIVL. The Cytoplasmic segment spans residues 176-182; it reads YKKRCYR. Residues 183–203 form a helical membrane-spanning segment; that stretch reads IIHGWLILSSFMLLFIFTYLY. The Lumenal portion of the chain corresponds to 204 to 216; sequence LEELLRAYNIPMD. The helical transmembrane segment at 217–237 threads the bilayer; that stretch reads YPTALLIMWNFGVVGMMSIHW. At 238 to 242 the chain is on the cytoplasmic side; that stretch reads QGPLR. Residues 243–263 traverse the membrane as a helical segment; the sequence is LQQGYLIFVAALMALVFIKYL. The Lumenal segment spans residues 264–265; the sequence is PE. The chain crosses the membrane as a helical span at residues 266 to 286; it reads WTAWAVLAAISIWDLIAVLSP. Asp-279 is an active-site residue. Residues 287–453 lie on the Cytoplasmic side of the membrane; it reads RGPLRILVET…QNHPDGQEER (167 aa). The interval 320–481 is interaction with Mettl2; the sequence is NTVTPQQSQA…ASSYGDWTTT (162 aa). Residues 327-350 are compositionally biased toward low complexity; the sequence is SQATASSSPSSSNSTTTTRATQNS. 2 disordered regions span residues 327–379 and 421–449; these read SQAT…DGSV and EVQS…HPDG. Polar residues-rich tracts occupy residues 361 to 370 and 421 to 443; these read GQRTGNSHPR and EVQS…TAPD. A helical transmembrane segment spans residues 454 to 474; that stretch reads GIKLGLGDFIFYSVLVGKASS. Residue Asp-461 is part of the active site. Over 475–481 the chain is Lumenal; sequence YGDWTTT. A helical transmembrane segment spans residues 482-502; that stretch reads IACFVAILIGLCLTLLLLAIW. At 503–506 the chain is on the cytoplasmic side; the sequence is RKAL. The short motif at 507–509 is the PAL element; the sequence is PAL. The segment at residues 507–527 is an intramembrane region (helical); it reads PALPISITFGLIFCFATSAVV. The Cytoplasmic segment spans residues 528–541; the sequence is KPFMEDLSAKQVFI.

Belongs to the peptidase A22A family. As to quaternary structure, homodimer. Component of the gamma-secretase complex, a complex composed of a presenilin (Psn) homodimer, nicastrin (Nct), Aph-1 and Pen-2. Interacts with Mettl2. Isoform 2 shows a better interaction with Mettl2 than isoform 1. In terms of processing, cleaved. The cleavage, which probably takes place between the 6th and the 7th transmembrane regions, may be required for activation of the gamma-secretase activity. Maternally expressed in nurse and follicle cells. In early embryos, expressed in all or most cells and later increases in CNS and epidermal tissues. In larvae, expression is seen in all imaginal disks, brain and optic lobes. In pupae, expression is seen in eye disk and brain.

It is found in the endoplasmic reticulum membrane. The protein localises to the golgi apparatus membrane. Functionally, probable catalytic subunit of the gamma-secretase complex, an endoprotease complex that catalyzes the intramembrane cleavage of integral membrane proteins such as Notch receptor. Required for S3 cleavage of Notch, which releases activated Notch protein from the cell membrane. Involved in the patterning of the optic lobes. The protein is Presenilin homolog (Psn) of Drosophila melanogaster (Fruit fly).